The sequence spans 249 residues: Testis-expressed protein 101 (249 aa).

The N-terminal stretch at Met-1 to Glu-25 is a signal peptide. N-linked (GlcNAc...) asparagine glycans are attached at residues Asn-45 and Asn-159. The UPAR/Ly6 domain maps to Cys-140–His-211. A lipid anchor (GPI-anchor amidated asparagine) is attached at Asn-222. The propeptide at Gly-223–Ser-249 is removed in mature form.

As to quaternary structure, interacts with VAMP3. Interacts with LY6K. Interacts with DPEP3; co-localized on the cell surface of spermatocytes, spermatids, and testicular spermatozoa, co-localized only in cytoplasmic droplets of caput and corpus epididymal sperm. Interacts with ADAM5. In terms of processing, N-glycosylated; by high mannose and/or biantennary complex and/or certain types of hybrid oligosaccharides; possesses different oligosaccharides chains according to its subcellular localization in the testis. Post-translationally, sheds from membrane raft by ACE and released from the cell surface of epididymal sperm while it passes through the caput epididymis leading to disappearance of TEX101 on spermatozoa; is essential to produce fertile spermatozoa. In terms of tissue distribution, detected in testis and spermatogonia. Not detected in spermatocytes. Detected in blood leukocytes.

It localises to the cell membrane. The protein resides in the membrane raft. The protein localises to the cytoplasmic vesicle. It is found in the secretory vesicle. Its subcellular location is the acrosome. It localises to the secreted. Plays a role in fertilization by controlling binding of sperm to zona pellucida and migration of spermatozoa into the oviduct. May play a role in signal transduction and promote protein tyrosine phosphorylation. The sequence is that of Testis-expressed protein 101 from Homo sapiens (Human).